The primary structure comprises 327 residues: GTP 3',8-cyclase (327 aa).

The region spanning 4–226 (AFARDIHYLR…LRLGDHPGIR (223 aa)) is the Radical SAM core domain. Arg13 contributes to the GTP binding site. The [4Fe-4S] cluster site is built by Cys20 and Cys24. Tyr26 contacts S-adenosyl-L-methionine. [4Fe-4S] cluster is bound at residue Cys27. Residue Arg63 coordinates GTP. S-adenosyl-L-methionine is bound at residue Gly67. Thr94 contacts GTP. Ser118 lines the S-adenosyl-L-methionine pocket. Residue Lys155 participates in GTP binding. Met189 lines the S-adenosyl-L-methionine pocket. [4Fe-4S] cluster is bound by residues Cys254 and Cys257. GTP is bound at residue 259–261 (RLR). A [4Fe-4S] cluster-binding site is contributed by Cys271.

The protein belongs to the radical SAM superfamily. MoaA family. As to quaternary structure, monomer and homodimer. The cofactor is [4Fe-4S] cluster.

It carries out the reaction GTP + AH2 + S-adenosyl-L-methionine = (8S)-3',8-cyclo-7,8-dihydroguanosine 5'-triphosphate + 5'-deoxyadenosine + L-methionine + A + H(+). The protein operates within cofactor biosynthesis; molybdopterin biosynthesis. Functionally, catalyzes the cyclization of GTP to (8S)-3',8-cyclo-7,8-dihydroguanosine 5'-triphosphate. This Heliobacterium modesticaldum (strain ATCC 51547 / Ice1) protein is GTP 3',8-cyclase.